We begin with the raw amino-acid sequence, 192 residues long: Secreted phosphoprotein 24 (192 aa).

Positions 1 to 29 are cleaved as a signal peptide; that stretch reads MGKTPEDFERHTMRSLIFVLALSVFTCSG. Intrachain disulfides connect Cys92–Cys103 and Cys116–Cys134. The segment at 155–192 is disordered; the sequence is TDPRKRGSSRSEAFSSRGRGHSNGDWRKPDYTSPGKVE.

It belongs to the SPP2 family. In terms of processing, multiply phosphorylated at serine residues.

It is found in the secreted. Functionally, could coordinate an aspect of bone turnover. The sequence is that of Secreted phosphoprotein 24 (SPP2) from Gallus gallus (Chicken).